The chain runs to 232 residues: 5'-methylthioadenosine/S-adenosylhomocysteine nucleosidase (232 aa).

E12 serves as the catalytic Proton acceptor. Residues G78, M153, and 174-175 (ME) contribute to the substrate site. Residue D198 is the Proton donor of the active site.

It belongs to the PNP/UDP phosphorylase family. MtnN subfamily.

The enzyme catalyses S-adenosyl-L-homocysteine + H2O = S-(5-deoxy-D-ribos-5-yl)-L-homocysteine + adenine. The catalysed reaction is S-methyl-5'-thioadenosine + H2O = 5-(methylsulfanyl)-D-ribose + adenine. It carries out the reaction 5'-deoxyadenosine + H2O = 5-deoxy-D-ribose + adenine. Its pathway is amino-acid biosynthesis; L-methionine biosynthesis via salvage pathway; S-methyl-5-thio-alpha-D-ribose 1-phosphate from S-methyl-5'-thioadenosine (hydrolase route): step 1/2. Functionally, catalyzes the irreversible cleavage of the glycosidic bond in both 5'-methylthioadenosine (MTA) and S-adenosylhomocysteine (SAH/AdoHcy) to adenine and the corresponding thioribose, 5'-methylthioribose and S-ribosylhomocysteine, respectively. Also cleaves 5'-deoxyadenosine, a toxic by-product of radical S-adenosylmethionine (SAM) enzymes, into 5-deoxyribose and adenine. In Hydrogenovibrio crunogenus (strain DSM 25203 / XCL-2) (Thiomicrospira crunogena), this protein is 5'-methylthioadenosine/S-adenosylhomocysteine nucleosidase.